Reading from the N-terminus, the 123-residue chain is Large ribosomal subunit protein uL24 (123 aa).

Belongs to the universal ribosomal protein uL24 family. As to quaternary structure, part of the 50S ribosomal subunit.

Functionally, one of two assembly initiator proteins, it binds directly to the 5'-end of the 23S rRNA, where it nucleates assembly of the 50S subunit. Its function is as follows. Located at the polypeptide exit tunnel on the outside of the subunit. This Pyrobaculum aerophilum (strain ATCC 51768 / DSM 7523 / JCM 9630 / CIP 104966 / NBRC 100827 / IM2) protein is Large ribosomal subunit protein uL24.